Reading from the N-terminus, the 587-residue chain is Pectinesterase 2 (587 aa).

Positions 1-40 are cleaved as a signal peptide; sequence MAPIKEFISKFSDFKNNKKLILSSAAIALLLLASIVGIAA. 2 N-linked (GlcNAc...) asparagine glycosylation sites follow: Asn99 and Asn218. Residues Thr351 and Gln381 each contribute to the substrate site. Asp404 acts as the Proton donor in catalysis. A disulfide bridge links Cys418 with Cys438. The Nucleophile role is filled by Asp425. 2 residues coordinate substrate: Arg493 and Trp495.

It in the N-terminal section; belongs to the PMEI family. This sequence in the C-terminal section; belongs to the pectinesterase family. As to expression, expressed in flower buds.

The protein resides in the secreted. It localises to the cell wall. The enzyme catalyses [(1-&gt;4)-alpha-D-galacturonosyl methyl ester](n) + n H2O = [(1-&gt;4)-alpha-D-galacturonosyl](n) + n methanol + n H(+). The protein operates within glycan metabolism; pectin degradation; 2-dehydro-3-deoxy-D-gluconate from pectin: step 1/5. Acts in the modification of cell walls via demethylesterification of cell wall pectin. This is Pectinesterase 2 (PME2) from Arabidopsis thaliana (Mouse-ear cress).